A 655-amino-acid chain; its full sequence is Probable alpha-galactosidase D (655 aa).

Residues 1-16 (MLPKIFYLSLLPAALG) form the signal peptide. 2 N-linked (GlcNAc...) asparagine glycosylation sites follow: Asn-47 and Asn-91. Cys-124 and Cys-155 are joined by a disulfide. The active-site Nucleophile is Asp-153. Residues Asn-180 and Asn-189 are each glycosylated (N-linked (GlcNAc...) asparagine). Residue 198–202 (EWGID) participates in substrate binding. Asp-220 acts as the Proton donor in catalysis. Residues Asn-349, Asn-436, Asn-458, Asn-503, Asn-537, Asn-541, and Asn-580 are each glycosylated (N-linked (GlcNAc...) asparagine).

Belongs to the glycosyl hydrolase 27 family.

The protein localises to the secreted. The catalysed reaction is Hydrolysis of terminal, non-reducing alpha-D-galactose residues in alpha-D-galactosides, including galactose oligosaccharides, galactomannans and galactolipids.. Its function is as follows. Hydrolyzes a variety of simple alpha-D-galactoside as well as more complex molecules such as oligosaccharides and polysaccharides. This Aspergillus flavus (strain ATCC 200026 / FGSC A1120 / IAM 13836 / NRRL 3357 / JCM 12722 / SRRC 167) protein is Probable alpha-galactosidase D (aglD).